A 370-amino-acid polypeptide reads, in one-letter code: Gibberellin 3-beta-dioxygenase 2-2 (370 aa).

A Fe2OG dioxygenase domain is found at 205–306 (MTATMHLNWY…RISLGYFLGP (102 aa)). Positions 229, 231, and 287 each coordinate Fe cation. The active site involves arginine 297.

Belongs to the iron/ascorbate-dependent oxidoreductase family. GA3OX subfamily. L-ascorbate serves as cofactor. Requires Fe cation as cofactor.

It catalyses the reaction gibberellin A20 + 2-oxoglutarate + O2 = gibberellin A1 + succinate + CO2. Functionally, converts the inactive gibberellin precursors GA9 and GA20 in the bioactives gibberellins GA4 and GA1. The polypeptide is Gibberellin 3-beta-dioxygenase 2-2 (GA3ox2-2) (Triticum aestivum (Wheat)).